Here is a 498-residue protein sequence, read N- to C-terminus: Angiopoietin-1 (498 aa).

Residues 1 to 19 form the signal peptide; the sequence is MTVFLSFAFFAAILTHIGC. Residues 81-119 adopt a coiled-coil conformation; the sequence is QKLQHLEHVMENYTQWLQKLENYIVENMKSEMAQIQQNA. Asn-92, Asn-122, Asn-154, Asn-243, and Asn-295 each carry an N-linked (GlcNAc...) asparagine glycan. Positions 153–261 form a coiled coil; sequence LNQTSRLEIQ…LELMDTVHNL (109 aa). The Fibrinogen C-terminal domain maps to 277-497; the sequence is REEEKPFRDC…STTMMIRPLD (221 aa). 2 disulfide bridges follow: Cys-286/Cys-315 and Cys-439/Cys-452.

Homooligomer. Interacts with TEK/TIE2. Interacts with SVEP1/polydom. Interacts with THBD; this interaction significantly inhibits the generation of activated PC and TAFIa/CPB2 by the thrombin/thrombomodulin complex.

The protein resides in the secreted. Functionally, binds and activates TEK/TIE2 receptor by inducing its dimerization and tyrosine phosphorylation. Plays an important role in the regulation of angiogenesis, endothelial cell survival, proliferation, migration, adhesion and cell spreading, reorganization of the actin cytoskeleton, but also maintenance of vascular quiescence. Required for normal angiogenesis and heart development during embryogenesis. After birth, activates or inhibits angiogenesis, depending on the context. Inhibits angiogenesis and promotes vascular stability in quiescent vessels, where endothelial cells have tight contacts. In quiescent vessels, ANGPT1 oligomers recruit TEK to cell-cell contacts, forming complexes with TEK molecules from adjoining cells, and this leads to preferential activation of phosphatidylinositol 3-kinase and the AKT1 signaling cascades. In migrating endothelial cells that lack cell-cell adhesions, ANGT1 recruits TEK to contacts with the extracellular matrix, leading to the formation of focal adhesion complexes, activation of PTK2/FAK and of the downstream kinases MAPK1/ERK2 and MAPK3/ERK1, and ultimately to the stimulation of sprouting angiogenesis. Mediates blood vessel maturation/stability. Implicated in endothelial developmental processes later and distinct from that of VEGF. Appears to play a crucial role in mediating reciprocal interactions between the endothelium and surrounding matrix and mesenchyme. This chain is Angiopoietin-1 (Angpt1), found in Mus musculus (Mouse).